The following is a 126-amino-acid chain: 3-aminobutyryl-CoA ammonia lyase (126 aa).

Belongs to the KAL family. Homohexamer.

The enzyme catalyses (3S)-3-aminobutanoyl-CoA = (2E)-butenoyl-CoA + NH4(+). It functions in the pathway amino-acid degradation; L-lysine degradation via acetate pathway. In terms of biological role, involved in the anaerobic fermentation of lysine. Catalyzes the deamination of L-3-aminobutyryl-CoA to produce crotonoyl-CoA. The sequence is that of 3-aminobutyryl-CoA ammonia lyase from Acetoanaerobium sticklandii (strain ATCC 12662 / DSM 519 / JCM 1433 / CCUG 9281 / NCIMB 10654 / HF) (Clostridium sticklandii).